We begin with the raw amino-acid sequence, 206 residues long: Ribosomal RNA large subunit methyltransferase E (206 aa).

S-adenosyl-L-methionine-binding residues include Gly63, Trp65, Asp83, Asp99, and Asp124. The active-site Proton acceptor is the Lys164.

This sequence belongs to the class I-like SAM-binding methyltransferase superfamily. RNA methyltransferase RlmE family.

It is found in the cytoplasm. The enzyme catalyses uridine(2552) in 23S rRNA + S-adenosyl-L-methionine = 2'-O-methyluridine(2552) in 23S rRNA + S-adenosyl-L-homocysteine + H(+). Specifically methylates the uridine in position 2552 of 23S rRNA at the 2'-O position of the ribose in the fully assembled 50S ribosomal subunit. The protein is Ribosomal RNA large subunit methyltransferase E of Buchnera aphidicola subsp. Schizaphis graminum (strain Sg).